The following is a 143-amino-acid chain: MGAIVLVALMALVASSSAFSDIEHNIMKLEGENIISSSSTPNDDQSSFSDGTSDMVESLFLNSGNRNLVLMMLSGRPQPNGRCIGDAQPCGFLVSDKGCCDPNYCSQYSKGKCICVPKGQPCGLLHFCCLGLTCDGSFNGTCK.

Residues 1–18 (MGAIVLVALMALVASSSA) form the signal peptide. Positions 19 to 80 (FSDIEHNIMK…MMLSGRPQPN (62 aa)) are excised as a propeptide. Intrachain disulfides connect Cys-83-Cys-100, Cys-90-Cys-105, Cys-99-Cys-113, Cys-115-Cys-129, Cys-122-Cys-134, and Cys-128-Cys-142.

It belongs to the urticatoxin-2 family. Expressed in trichomes, that are stiff epidermal hairs located on the surface of petioles and leaves.

The protein localises to the secreted. Its function is as follows. Plant defense neurotoxin that causes pain and systemic symptoms in mammals via modulation of voltage-gated sodium channels (Nav). Potent modulator of human Nav1.5/SCN5A (EC(50)=55 nM), Nav1.6/SCN8A (EC(50)=0.86 nM), and Nav1.7/SCN9A (EC(50)=208 nM), where it shifts the activation threshold to more negative potentials and delays fast inactivation. Also shifts the voltage-dependence of steady-state fast inactivation of Nav1.6/SCN8A, but not that of Nav1.5/SCN5A or Nav1.7/SCN9A. On Nav1.7/SCN9A, principally acts by binding to extracellular loops of domain IV (Nav site 3). In vivo, intraplantar injection into mice causes numerous dose-dependent, immediate, and long-lasting spontaneous pain behaviors, while no swelling is observed in the injected paw. At the highest doses tested, systemic symptoms including hypokinesia and hypersalivation are observed. In Urtica ferox (Tree nettle), this protein is Beta/delta-urticatoxin-Uf2b.